The following is a 233-amino-acid chain: MSFAAAQATYVLHSRPYKETSALVDFFTPLGRLRAVLRGARGKAGALARPFVPLEAEWRGRGELKTVARLESAGIPNLLNGQALFSGLYLNELLIRLLPAEDPQPEIFAHYAATLPLLAAGRPIEPLLRAFEWRLLEQLGYGFALDVDIDGRPIEPQALYQLLPEAGLEPVAQLQPGLFQGSELLSMADADWSAPGALAAAKRLMRQALAPHLGGRPLVSRELFMNRKESPRD.

The protein belongs to the RecO family.

Involved in DNA repair and RecF pathway recombination. This chain is DNA repair protein RecO, found in Pseudomonas aeruginosa (strain UCBPP-PA14).